Reading from the N-terminus, the 251-residue chain is Flap endonuclease Xni (251 aa).

Residue aspartate 104 coordinates Mg(2+). The 5'-3' exonuclease domain occupies 160–249 (VQPQQLPDYW…IDGNLQQLRL (90 aa)). K(+) contacts are provided by leucine 171, alanine 172, proline 180, valine 182, and isoleucine 185. The tract at residues 184 to 189 (GIGPKS) is interaction with DNA.

This sequence belongs to the Xni family. It depends on Mg(2+) as a cofactor. K(+) is required as a cofactor.

Functionally, has flap endonuclease activity. During DNA replication, flap endonucleases cleave the 5'-overhanging flap structure that is generated by displacement synthesis when DNA polymerase encounters the 5'-end of a downstream Okazaki fragment. The chain is Flap endonuclease Xni from Escherichia coli O17:K52:H18 (strain UMN026 / ExPEC).